Here is a 160-residue protein sequence, read N- to C-terminus: Phosphopantetheine adenylyltransferase (160 aa).

S9 serves as a coordination point for substrate. ATP-binding positions include 9–10 and H17; that span reads SF. Residues K41, L73, and R87 each coordinate substrate. Residues 88 to 90, E98, and 123 to 129 each bind ATP; these read GLR and YTFLSSS.

This sequence belongs to the bacterial CoaD family. In terms of assembly, homohexamer. Mg(2+) serves as cofactor.

The protein localises to the cytoplasm. The enzyme catalyses (R)-4'-phosphopantetheine + ATP + H(+) = 3'-dephospho-CoA + diphosphate. It participates in cofactor biosynthesis; coenzyme A biosynthesis; CoA from (R)-pantothenate: step 4/5. Reversibly transfers an adenylyl group from ATP to 4'-phosphopantetheine, yielding dephospho-CoA (dPCoA) and pyrophosphate. This is Phosphopantetheine adenylyltransferase from Dictyoglomus turgidum (strain DSM 6724 / Z-1310).